Reading from the N-terminus, the 607-residue chain is uncharacterized protein (607 aa).

Disordered stretches follow at residues 28–114 (GAER…KLRR) and 142–188 (DQER…NNSS). Over residues 35–50 (SSHGSINSRSASPNKA) the composition is skewed to polar residues. Composition is skewed to basic and acidic residues over residues 90 to 102 (VNGE…DHDT) and 161 to 174 (KENK…KDLS). The segment covering 177–188 (SSSSMKKANNSS) has biased composition (low complexity). 2 PHD-type zinc fingers span residues 263 to 312 (NDYC…CKHH) and 406 to 459 (PILC…HSDH).

This is an uncharacterized protein from Schizosaccharomyces pombe (strain 972 / ATCC 24843) (Fission yeast).